Here is a 396-residue protein sequence, read N- to C-terminus: Tryptophan synthase beta chain (396 aa).

The residue at position 86 (Lys-86) is an N6-(pyridoxal phosphate)lysine.

This sequence belongs to the TrpB family. Tetramer of two alpha and two beta chains. The cofactor is pyridoxal 5'-phosphate.

The enzyme catalyses (1S,2R)-1-C-(indol-3-yl)glycerol 3-phosphate + L-serine = D-glyceraldehyde 3-phosphate + L-tryptophan + H2O. Its pathway is amino-acid biosynthesis; L-tryptophan biosynthesis; L-tryptophan from chorismate: step 5/5. Its function is as follows. The beta subunit is responsible for the synthesis of L-tryptophan from indole and L-serine. The chain is Tryptophan synthase beta chain from Pectobacterium carotovorum subsp. carotovorum (strain PC1).